Consider the following 268-residue polypeptide: Zygote formation protein zyg1 (268 aa).

In terms of biological role, plays an essential role in zygote formation by inducing sexual cell fusion. Overexpressing cells eventually formed many loose mounds, in which giant multinucleate cells were surrounded by normal-sized cells. This is Zygote formation protein zyg1 (zyg1) from Dictyostelium mucoroides (Slime mold).